Consider the following 238-residue polypeptide: Probable transcriptional regulatory protein STER_0242 (238 aa).

It belongs to the TACO1 family. YeeN subfamily.

It is found in the cytoplasm. This Streptococcus thermophilus (strain ATCC BAA-491 / LMD-9) protein is Probable transcriptional regulatory protein STER_0242.